The following is a 72-amino-acid chain: Protein RALF-like 11 (72 aa).

Positions 1–17 are cleaved as a signal peptide; the sequence is MKAWLICLLVICAAVIA. 2 cysteine pairs are disulfide-bonded: Cys34–Cys43 and Cys63–Cys69.

This sequence belongs to the plant rapid alkalinization factor (RALF) family.

The protein resides in the secreted. Its function is as follows. Cell signaling peptide that may regulate plant stress, growth, and development. Mediates a rapid alkalinization of extracellular space by mediating a transient increase in the cytoplasmic Ca(2+) concentration leading to a calcium-dependent signaling events through a cell surface receptor and a concomitant activation of some intracellular mitogen-activated protein kinases. The sequence is that of Protein RALF-like 11 (RALFL11) from Arabidopsis thaliana (Mouse-ear cress).